Here is a 707-residue protein sequence, read N- to C-terminus: Elongation factor G (707 aa).

In terms of domain architecture, tr-type G spans 8-290 (ERYRNIGICA…AVIEYLPSPT (283 aa)). GTP is bound by residues 17–24 (AHVDAGKT), 88–92 (DTPGH), and 142–145 (NKMD).

This sequence belongs to the TRAFAC class translation factor GTPase superfamily. Classic translation factor GTPase family. EF-G/EF-2 subfamily.

It is found in the cytoplasm. Functionally, catalyzes the GTP-dependent ribosomal translocation step during translation elongation. During this step, the ribosome changes from the pre-translocational (PRE) to the post-translocational (POST) state as the newly formed A-site-bound peptidyl-tRNA and P-site-bound deacylated tRNA move to the P and E sites, respectively. Catalyzes the coordinated movement of the two tRNA molecules, the mRNA and conformational changes in the ribosome. This Idiomarina loihiensis (strain ATCC BAA-735 / DSM 15497 / L2-TR) protein is Elongation factor G.